The chain runs to 26 residues: Acetylcholine receptor subunit delta (26 aa).

This sequence belongs to the ligand-gated ion channel (TC 1.A.9) family. Acetylcholine receptor (TC 1.A.9.1) subfamily. As to quaternary structure, pentamer of two alpha chains, and one each of the beta, delta, and gamma chains.

The protein localises to the postsynaptic cell membrane. Its subcellular location is the cell membrane. The enzyme catalyses K(+)(in) = K(+)(out). The catalysed reaction is Na(+)(in) = Na(+)(out). Functionally, after binding acetylcholine, the AChR responds by an extensive change in conformation that affects all subunits and leads to opening of an ion-conducting channel across the plasma membrane. The chain is Acetylcholine receptor subunit delta (chrnd) from Electrophorus electricus (Electric eel).